Reading from the N-terminus, the 404-residue chain is L-cysteine:1D-myo-inositol 2-amino-2-deoxy-alpha-D-glucopyranoside ligase 1 (404 aa).

Cysteine 47 contacts Zn(2+). L-cysteinyl-5'-AMP contacts are provided by residues 47–50 (CGIT), threonine 62, and 85–87 (NIT). The 'HIGH' region signature appears at 49-59 (ITPYDSTHLGH). The short motif at 188 to 193 (ERGGDP) is the 'ERGGDP' region element. Residue tryptophan 228 participates in L-cysteinyl-5'-AMP binding. Cysteine 232 is a binding site for Zn(2+). 250–252 (GSD) provides a ligand contact to L-cysteinyl-5'-AMP. Residue histidine 257 coordinates Zn(2+). Isoleucine 284 is an L-cysteinyl-5'-AMP binding site. Residues 290–294 (KMSKS) carry the 'KMSKS' region motif.

The protein belongs to the class-I aminoacyl-tRNA synthetase family. MshC subfamily. In terms of assembly, monomer. Requires Zn(2+) as cofactor.

It catalyses the reaction 1D-myo-inositol 2-amino-2-deoxy-alpha-D-glucopyranoside + L-cysteine + ATP = 1D-myo-inositol 2-(L-cysteinylamino)-2-deoxy-alpha-D-glucopyranoside + AMP + diphosphate + H(+). Catalyzes the ATP-dependent condensation of GlcN-Ins and L-cysteine to form L-Cys-GlcN-Ins. The protein is L-cysteine:1D-myo-inositol 2-amino-2-deoxy-alpha-D-glucopyranoside ligase 1 of Corynebacterium urealyticum (strain ATCC 43042 / DSM 7109).